The chain runs to 479 residues: MPRTSLLTLACALATGASAFSYGAAIPQSTQEKQFSQEFRDGYSILKHYGGNGPYSERVSYGIARDPPTSCEVDQVIMVKRHGERYPSPSAGKDIEEALAKVYSINTTEYKGDLAFLNDWTYYVPNECYYNAETTSGPYAGLLDAYNHGNDYKARYGHLWNGETVVPFFSSGYGRVIETARKFGEGFFGYNYSTNAALNIISESEVMGADSLTPTCDTDNDQTTCDNLTYQLPQFKVAAARLNSQNPGMNLTASDVYNLMVMASFELNARPFSNWINAFTQDEWVSFGYVEDLNYYYCAGPGDKNMAAVGAVYANASLTLLNQGPKEAGSLFFNFAHDTNITPILAALGVLIPNEDLPLDRVAFGNPYSIGNIVPMGGHLTIERLSCQATALSDEGTYVRLVLNEAVLPFNDCTSGPGYSCPLANYTSILNKNLPDYTTTCNVSASYPQYLSFWWNYNTTTELNYRSSPIACQEGDAMD.

The first 19 residues, 1 to 19, serve as a signal peptide directing secretion; the sequence is MPRTSLLTLACALATGASA. Disulfide bonds link cysteine 71–cysteine 387, cysteine 128–cysteine 472, cysteine 216–cysteine 441, cysteine 225–cysteine 298, and cysteine 413–cysteine 421. The active-site Nucleophile is the histidine 82. Residue asparagine 191 is glycosylated (N-linked (GlcNAc...) asparagine). N-linked (GlcNAc...) asparagine glycosylation is present at asparagine 315. The Proton donor role is filled by aspartate 338. Asparagine 458 carries an N-linked (GlcNAc...) asparagine glycan.

The protein belongs to the histidine acid phosphatase family. Homodimer.

The enzyme catalyses 1D-myo-inositol hexakisphosphate + H2O = 1D-myo-inositol 1,2,4,5,6-pentakisphosphate + phosphate. In terms of biological role, catalyzes the hydrolysis of inorganic orthophosphate from phytate. The polypeptide is 3-phytase B (phyB) (Aspergillus awamori (Black koji mold)).